A 302-amino-acid chain; its full sequence is Putative peptide permease protein BRA0407/BS1330_II0404 (302 aa).

Positions 1-22 (MRSSIHASRLRKMGQSIPASTG) are disordered. The next 6 helical transmembrane spans lie at 38–58 (IFGLVLLTPLLFAVLTYPLWL), 101–121 (LLVAVSSVVLSTAIGFLIGAI), 147–167 (IFLLVLASIIGSGIWSTVVVI), 200–222 (AGLGHLLFRHGLPNSIDILVVYA), 230–250 (ILLEAGLSFLGLGVPPPAASW), and 268–288 (WQWLFPGGALVLAVLAINFIG). The region spanning 97-288 (GRISLLVAVS…LAVLAINFIG (192 aa)) is the ABC transmembrane type-1 domain.

Belongs to the binding-protein-dependent transport system permease family. As to quaternary structure, the complex is composed of two ATP-binding proteins (BRA0404 and BRA0405), two transmembrane proteins (BRA0407 and BRA0408) and a solute-binding protein (BRA0409).

The protein localises to the cell inner membrane. Its function is as follows. Probably part of an ABC transporter complex that could be involved in peptide import. Probably responsible for the translocation of the substrate across the membrane. The sequence is that of Putative peptide permease protein BRA0407/BS1330_II0404 from Brucella suis biovar 1 (strain 1330).